Reading from the N-terminus, the 348-residue chain is Enkurin domain-containing protein 1 (348 aa).

Disordered stretches follow at residues 1 to 65, 84 to 195, and 262 to 282; these read MCEG…RPGG, GGIS…PSAK, and AEARQHSQPDPAMPPGHTRMP. At Ser-93 the chain carries Phosphoserine. Residues 95 to 127 are compositionally biased toward basic and acidic residues; sequence KRKDPKDHEKENMRRIREIQRRFREQEHSREQG. Phosphoserine is present on Ser-138. Basic and acidic residues predominate over residues 139-148; the sequence is PKYDKVESRV. The 93-residue stretch at 253-345 folds into the Enkurin domain; the sequence is ERRDLWRREA…IFSRPKVFVK (93 aa).

Interacts with alpha-tubulin. Interacts (via central region) with CCP110 (via N-terminal region); competes with CEP97 for binding to CCP110.

It is found in the cytoplasm. The protein resides in the cytoskeleton. The protein localises to the microtubule organizing center. It localises to the centrosome. Its subcellular location is the centriole. It is found in the cilium basal body. The protein resides in the cell projection. The protein localises to the cilium. It localises to the spindle. Its subcellular location is the spindle pole. It is found in the cilium axoneme. Its function is as follows. Microtubule-binding protein which regulates microtubule organization and stability. Promotes the stability of astral microtubules and facilitates the proper orientation of the mitotic spindle. This allows the oriented division of basal keratinocytes and contributes to epidermal stratification. Required for the assembly of both primary and motile cilia. Destabilizes the interaction between CCP110 and CEP97 by competing with CEP97 for binding to CCP110 which promotes the removal of CCP110 and CEP97 from the mother centriole and allows the initiation of ciliogenesis. The chain is Enkurin domain-containing protein 1 (ENKD1) from Bos taurus (Bovine).